The following is a 57-amino-acid chain: uncharacterized protein (57 aa).

Residues 1–57 (MITPIGKNSNSNSNSNSNSNSNSNSNSNSNSNSNSNSNSNSNSNSNSNSNSNSNSNN) form a disordered region. Positions 8-57 (NSNSNSNSNSNSNSNSNSNSNSNSNSNSNSNSNSNSNSNSNSNSNSNSNN) are enriched in low complexity.

This is an uncharacterized protein from Dictyostelium discoideum (Social amoeba).